We begin with the raw amino-acid sequence, 171 residues long: Tetratricopeptide repeat protein 9C (171 aa).

TPR repeat units lie at residues 8 to 41 (AQLY…LRGL), 72 to 107 (TDCY…QPDN), and 108 to 141 (AKAL…QPKD).

This sequence belongs to the TTC9 family.

This Homo sapiens (Human) protein is Tetratricopeptide repeat protein 9C (TTC9C).